We begin with the raw amino-acid sequence, 152 residues long: Endoribonuclease YbeY (152 aa).

3 residues coordinate Zn(2+): His113, His117, and His123.

This sequence belongs to the endoribonuclease YbeY family. It depends on Zn(2+) as a cofactor.

Its subcellular location is the cytoplasm. Functionally, single strand-specific metallo-endoribonuclease involved in late-stage 70S ribosome quality control and in maturation of the 3' terminus of the 16S rRNA. In Pseudoalteromonas atlantica (strain T6c / ATCC BAA-1087), this protein is Endoribonuclease YbeY.